We begin with the raw amino-acid sequence, 998 residues long: Collagen alpha-1(I) chain (998 aa).

The disordered stretch occupies residues 1 to 998; the sequence is SYGYDEKGGV…GPPGPPGPPG (998 aa). Residues 9-22 are compositionally biased toward low complexity; it reads GVSVPGPMGPSGPR. A 4-hydroxyproline mark is found at Pro-25, Pro-28, Pro-30, Pro-39, Pro-42, Pro-45, Pro-59, Pro-74, Pro-80, Pro-89, and Pro-95. The segment covering 62–76 has biased composition (basic and acidic residues); that stretch reads NGDDGEAGKPGRPGE. 5-hydroxylysine; alternate is present on Lys-98. O-linked (Gal...) hydroxylysine; alternate glycosylation occurs at Lys-98. Residue Ser-104 is modified to Phosphoserine. Residues 112–128 are compositionally biased toward low complexity; that stretch reads DAGPAGPKGEPGSPGEN. 4-hydroxyproline occurs at positions 122, 125, 131, 140, 146, 167, 176, 179, 206, 209, 221, 227, 236, 242, 245, and 260. The span at 146–164 shows a compositional bias: low complexity; sequence PGASGPAGARGNDGATGAA. Positions 166–178 are enriched in pro residues; sequence PPGPTGPAGPPGF. The segment covering 212-251 has biased composition (low complexity); the sequence is AGAAGPAGNPGADGQPGAKGANGAPGIAGAPGFPGARGPS. Lys-263 carries the post-translational modification 5-hydroxylysine. 4-hydroxyproline is present on residues Pro-269, Pro-272, Pro-284, Pro-293, Pro-308, Pro-314, Pro-323, and Pro-329. Gly residues predominate over residues 318 to 327; that stretch reads GERGGPGSRG. The residue at position 338 (Lys-338) is a 5-hydroxylysine. 4-hydroxyproline occurs at positions 347, 356, 362, 368, 377, 380, 389, 398, 404, 416, 425, 434, 437, 455, 472, 478, 484, 490, 496, 502, 514, 523, 537, 543, and 552. Residues 371-397 are compositionally biased toward low complexity; sequence KGLTGSPGSPGPDGKTGPPGPAGQDGR. The span at 406–425 shows a compositional bias: low complexity; it reads ARGQAGVMGFPGPKGAAGEP. The span at 484-493 shows a compositional bias: low complexity; sequence PGEAGKPGEQ. Lys-564 carries the post-translational modification 5-hydroxylysine. A 4-hydroxyproline mark is found at Pro-570, Pro-585, and Pro-591. Low complexity predominate over residues 597–611; sequence SGPSGPAGPTGARGA. Position 600 is a phosphoserine (Ser-600). A 4-hydroxyproline mark is found at Pro-612, Pro-618, Pro-621, Pro-630, Pro-636, Pro-654, Pro-663, and Pro-672. The span at 624-651 shows a compositional bias: low complexity; the sequence is AGFAGPPGADGQPGAKGEPGDAGAKGDA. Residues 653 to 665 show a composition bias toward pro residues; sequence PPGPAGPTGPPGP. Position 675 is a 5-hydroxylysine (Lys-675). Over residues 680–696 the composition is skewed to low complexity; that stretch reads SAGPPGATGFPGAAGRV. Pro-684 and Pro-690 each carry 4-hydroxyproline. The residue at position 698 (Pro-698) is a 3-hydroxyproline. 4-hydroxyproline is present on residues Pro-699, Pro-708, Pro-711, Pro-732, Pro-741, Pro-749, Pro-758, Pro-776, Pro-785, Pro-788, Pro-794, Pro-809, Pro-815, Pro-821, Pro-830, and Pro-836. A compositionally biased stretch (low complexity) spans 725–734; sequence ETGPAGRPGE. Residues 746-758 show a composition bias toward low complexity; the sequence is KGSPGADGPAGAP. Residues 808–818 show a composition bias toward pro residues; it reads PPGPMGPPGLA. Residue Lys-845 is modified to 5-hydroxylysine. A compositionally biased stretch (pro residues) spans 853–868; that stretch reads PGPPGAPGAPGAPGPV. 4-hydroxyproline occurs at positions 856, 859, and 862. Residues 889–903 show a composition bias toward low complexity; the sequence is AGPAGARGPAGPQGP. Positions 904 to 918 are enriched in basic and acidic residues; that stretch reads RGDKGETGEQGDRGI. The residue at position 907 (Lys-907) is a 5-hydroxylysine. Lys-919 carries the post-translational modification 5-hydroxylysine; alternate. An O-linked (Gal...) hydroxylysine; alternate glycan is attached at Lys-919. Pro-934, Pro-937, Pro-955, and Pro-970 each carry 4-hydroxyproline. Low complexity predominate over residues 937–970; sequence PGEQGPSGASGPAGPRGPPGSAGSPGKDGLNGLP. At Pro-975 the chain carries 3-hydroxyproline. Pro-976 carries the 4-hydroxyproline modification. A compositionally biased stretch (pro residues) spans 988-998; that stretch reads VGPPGPPGPPG. Pro-990 is modified (3-hydroxyproline). Pro-991 carries the 4-hydroxyproline modification. Pro-993 bears the 3-hydroxyproline mark. Position 994 is a 4-hydroxyproline (Pro-994). Pro-996 carries the post-translational modification 3-hydroxyproline. Pro-997 carries the 4-hydroxyproline modification.

It belongs to the fibrillar collagen family. Trimers of one alpha 2(I) and two alpha 1(I) chains. Post-translationally, contains mostly 4-hydroxyproline. Proline residues at the third position of the tripeptide repeating unit (G-X-Y) are hydroxylated in some or all of the chains. Contains 3-hydroxyproline at a few sites. This modification occurs on the first proline residue in the sequence motif Gly-Pro-Hyp, where Hyp is 4-hydroxyproline. In terms of processing, lysine residues at the third position of the tripeptide repeating unit (G-X-Y) are 5-hydroxylated in some or all of the chains. Post-translationally, O-glycosylated on hydroxylated lysine residues. The O-linked glycan consists of a Glc-Gal disaccharide. As to expression, expressed in bones.

It is found in the secreted. Its subcellular location is the extracellular space. It localises to the extracellular matrix. Its function is as follows. Type I collagen is a member of group I collagen (fibrillar forming collagen). This chain is Collagen alpha-1(I) chain, found in Nothrotheriops shastensis (Shasta ground sloth).